A 648-amino-acid chain; its full sequence is Transcription initiation factor TFIID subunit 5 (648 aa).

Low complexity predominate over residues 1 to 13 (MDSENSSSHSISS). Positions 1 to 21 (MDSENSSSHSISSPQMFQNTH) are disordered. The 33-residue stretch at 35–67 (MNNESLQMIIGYLRRNGLTETEELLTREAGPVL) folds into the LisH domain. 6 WD repeats span residues 317-358 (NAPI…KKLR), 392-431 (GHGG…NAVI), 433-472 (RTPA…PLRI), 475-514 (DPYG…RVRI), 517-556 (GHKA…LVAA), and 560-599 (EQAG…GTVL).

The protein belongs to the WD repeat TAF5 family. Component of the TFIID basal transcription factor complex, composed of TATA-box-binding protein tbp-1, and a number of TBP-associated factors (TAFs).

It is found in the nucleus. The TFIID basal transcription factor complex plays a major role in the initiation of RNA polymerase II (Pol II)-dependent transcription. TFIID recognizes and binds promoters via its subunit tbp-1, a TATA-box-binding protein, and promotes assembly of the pre-initiation complex (PIC). The TFIID complex consists of tbp-1 and TBP-associated factors (TAFs), including taf-5. Essential for early embryonic development, but not required for transcription of some genes; probably acts via activating transcription initiation by RNA Pol II, as part of the TFIID complex. The polypeptide is Transcription initiation factor TFIID subunit 5 (Caenorhabditis elegans).